A 239-amino-acid polypeptide reads, in one-letter code: Purine nucleoside phosphorylase DeoD-type (239 aa).

His5 lines the a purine D-ribonucleoside pocket. Phosphate-binding positions include Gly21, Arg25, Arg44, and 88-91 (RVGS). A purine D-ribonucleoside contacts are provided by residues 180 to 182 (EME) and 204 to 205 (SD). Asp205 acts as the Proton donor in catalysis.

The protein belongs to the PNP/UDP phosphorylase family. As to quaternary structure, homohexamer; trimer of homodimers.

The enzyme catalyses a purine D-ribonucleoside + phosphate = a purine nucleobase + alpha-D-ribose 1-phosphate. The catalysed reaction is a purine 2'-deoxy-D-ribonucleoside + phosphate = a purine nucleobase + 2-deoxy-alpha-D-ribose 1-phosphate. Catalyzes the reversible phosphorolytic breakdown of the N-glycosidic bond in the beta-(deoxy)ribonucleoside molecules, with the formation of the corresponding free purine bases and pentose-1-phosphate. In Salmonella agona (strain SL483), this protein is Purine nucleoside phosphorylase DeoD-type.